The sequence spans 115 residues: uncharacterized protein (115 aa).

3 helical membrane passes run 1 to 21, 33 to 53, and 54 to 74; these read MFLAGVLCMCAAAASALFGSW, ALALRAMAPTQLAAAVMLAAG, and GVVAVAAPGHTALMVVIVCIA.

To M.leprae ML0030.

It is found in the cell membrane. This is an uncharacterized protein from Mycobacterium tuberculosis (strain CDC 1551 / Oshkosh).